A 192-amino-acid chain; its full sequence is Elongation factor P (192 aa).

This sequence belongs to the elongation factor P family.

It is found in the cytoplasm. The protein operates within protein biosynthesis; polypeptide chain elongation. Involved in peptide bond synthesis. Stimulates efficient translation and peptide-bond synthesis on native or reconstituted 70S ribosomes in vitro. Probably functions indirectly by altering the affinity of the ribosome for aminoacyl-tRNA, thus increasing their reactivity as acceptors for peptidyl transferase. The protein is Elongation factor P of Borrelia duttonii (strain Ly).